The sequence spans 184 residues: Mitochondrial import inner membrane translocase subunit TIM22 (184 aa).

The segment at 1-26 (MSLWGVYTGPQPPKKPLQEMTQEEQA) is disordered. 2 disulfide bridges follow: Cys-40/Cys-118 and Cys-137/Cys-156. Helical transmembrane passes span 45–65 (VMAGVSGFALGGFFGLFMASM) and 151–171 (AALVGCAGFAAFSLAIDMYLN).

This sequence belongs to the Tim17/Tim22/Tim23 family. As to quaternary structure, component of the TIM22 complex, whose core is composed of TIM22 and TIM54, associated with the 70 kDa heterohexamer composed of TIM9 and TIM10 (or TIM8 and TIM13).

It localises to the mitochondrion inner membrane. Its function is as follows. Essential core component of the TIM22 complex, a complex that mediates the import and insertion of multi-pass transmembrane proteins into the mitochondrial inner membrane. In the TIM22 complex, it constitutes the voltage-activated and signal-gated channel. Forms a twin-pore translocase that uses the membrane potential as external driving force in 2 voltage-dependent steps. This is Mitochondrial import inner membrane translocase subunit TIM22 from Candida albicans (strain SC5314 / ATCC MYA-2876) (Yeast).